The sequence spans 383 residues: Lipid-A-disaccharide synthase (383 aa).

Belongs to the LpxB family.

The catalysed reaction is 2-N,3-O-bis[(3R)-3-hydroxytetradecanoyl]-alpha-D-glucosaminyl 1-phosphate + UDP-2-N,3-O-bis[(3R)-3-hydroxytetradecanoyl]-alpha-D-glucosamine = lipid A disaccharide (E. coli) + UDP + H(+). The enzyme catalyses a lipid X + a UDP-2-N,3-O-bis[(3R)-3-hydroxyacyl]-alpha-D-glucosamine = a lipid A disaccharide + UDP + H(+). Its pathway is glycolipid biosynthesis; lipid IV(A) biosynthesis; lipid IV(A) from (3R)-3-hydroxytetradecanoyl-[acyl-carrier-protein] and UDP-N-acetyl-alpha-D-glucosamine: step 5/6. Functionally, condensation of UDP-2,3-diacylglucosamine and 2,3-diacylglucosamine-1-phosphate to form lipid A disaccharide, a precursor of lipid A, a phosphorylated glycolipid that anchors the lipopolysaccharide to the outer membrane of the cell. The protein is Lipid-A-disaccharide synthase of Klebsiella pneumoniae subsp. pneumoniae (strain ATCC 700721 / MGH 78578).